A 32-amino-acid polypeptide reads, in one-letter code: Potassium channel toxin alpha-KTx 10.2 (32 aa).

Disulfide bonds link Cys-3–Cys-22, Cys-8–Cys-12, and Cys-27–Cys-29. Tyrosine amide is present on Tyr-32.

The protein belongs to the short scorpion toxin superfamily. Potassium channel inhibitor family. Alpha-KTx 10 subfamily. Expressed by the venom gland.

It is found in the secreted. Functionally, blocks Shaker B potassium-channels (Kv1.1/KCNA1 sub-family). In Centruroides noxius (Mexican scorpion), this protein is Potassium channel toxin alpha-KTx 10.2.